We begin with the raw amino-acid sequence, 278 residues long: MTFGEKLLNAASTRGRLCVGIDPHESLLTSWGLPVNVDGLAEFSRACVEAFADTVALVKPQVAFYERFGSAGFAILEETIQTLRERGCLVVSDAKRGDIGSTMAGYASAWLDPASPLSSDAVTVSPYLGFHSLDPVFELAEQHGRGVFVLAATSNPEARELQDQQNADGVSISQQIVDQAAALNAPYMAQGKAGNIGVVIGATLSKPPRLSTLGGAILMPGVGAQGGTASDVDEIAGDMAHLAFPNVSRSILATGPDIAEMKNSVAKTAADFPGFPRS.

K95 serves as the catalytic Proton donor.

Belongs to the OMP decarboxylase family. Type 2 subfamily.

The catalysed reaction is orotidine 5'-phosphate + H(+) = UMP + CO2. It functions in the pathway pyrimidine metabolism; UMP biosynthesis via de novo pathway; UMP from orotate: step 2/2. The polypeptide is Orotidine 5'-phosphate decarboxylase (Corynebacterium glutamicum (strain R)).